A 430-amino-acid chain; its full sequence is Enolase (430 aa).

Q163 contacts (2R)-2-phosphoglycerate. The active-site Proton donor is E205. Residues D242, E286, and D313 each coordinate Mg(2+). (2R)-2-phosphoglycerate is bound by residues K338, R367, S368, and K389. K338 (proton acceptor) is an active-site residue.

This sequence belongs to the enolase family. The cofactor is Mg(2+).

It localises to the cytoplasm. It is found in the secreted. Its subcellular location is the cell surface. It catalyses the reaction (2R)-2-phosphoglycerate = phosphoenolpyruvate + H2O. It participates in carbohydrate degradation; glycolysis; pyruvate from D-glyceraldehyde 3-phosphate: step 4/5. Catalyzes the reversible conversion of 2-phosphoglycerate (2-PG) into phosphoenolpyruvate (PEP). It is essential for the degradation of carbohydrates via glycolysis. This Symbiobacterium thermophilum (strain DSM 24528 / JCM 14929 / IAM 14863 / T) protein is Enolase.